A 137-amino-acid polypeptide reads, in one-letter code: Putative nickel-responsive regulator (137 aa).

Ni(2+) is bound by residues histidine 79, histidine 90, histidine 92, and cysteine 98.

The protein belongs to the transcriptional regulatory CopG/NikR family. The cofactor is Ni(2+).

Transcriptional regulator. The chain is Putative nickel-responsive regulator from Campylobacter concisus (strain 13826).